We begin with the raw amino-acid sequence, 294 residues long: Elongation factor Ts (294 aa).

Positions 78–81 are involved in Mg(2+) ion dislocation from EF-Tu; sequence TDFV.

This sequence belongs to the EF-Ts family.

The protein localises to the cytoplasm. Functionally, associates with the EF-Tu.GDP complex and induces the exchange of GDP to GTP. It remains bound to the aminoacyl-tRNA.EF-Tu.GTP complex up to the GTP hydrolysis stage on the ribosome. This is Elongation factor Ts from Mycoplasma mobile (strain ATCC 43663 / 163K / NCTC 11711) (Mesomycoplasma mobile).